The primary structure comprises 610 residues: Zinc metalloproteinase-disintegrin-like bothropasin (610 aa).

An N-terminal signal peptide occupies residues 1–20; the sequence is MIEVLLVTICLAAFPYQGSS. A propeptide spanning residues 21-191 is cleaved from the precursor; sequence IILESGNVND…ASQLVVTAEQ (171 aa). Pyrrolidone carboxylic acid is present on Gln192. The Peptidase M12B domain maps to 198-394; it reads RYVELFIVVD…ENPQCILNEP (197 aa). Glu201 and Asp285 together coordinate Ca(2+). 3 cysteine pairs are disulfide-bonded: Cys309–Cys389, Cys349–Cys373, and Cys351–Cys356. His334 lines the Zn(2+) pocket. Glu335 is an active-site residue. Residues His338 and His344 each coordinate Zn(2+). A glycan (N-linked (GlcNAc...) asparagine) is linked at Asn372. Positions 389, 392, 404, 407, 409, 411, 414, and 417 each coordinate Ca(2+). Residues 402 to 488 enclose the Disintegrin domain; the sequence is PPVCGNELLE…ECPADVFHKN (87 aa). Intrachain disulfides connect Cys405–Cys424, Cys405–Cys434, Cys416–Cys429, Cys416–Cys434, Cys418–Cys424, Cys428–Cys451, Cys442–Cys448, Cys447–Cys473, Cys460–Cys480, Cys467–Cys492, Cys467–Cys499, Cys492–Cys504, Cys499–Cys504, Cys511–Cys526, Cys511–Cys561, Cys526–Cys572, Cys539–Cys549, Cys549–Cys556, Cys556–Cys598, Cys561–Cys572, Cys592–Cys603, and Cys598–Cys603. Residues 466–468 carry the D/ECD-tripeptide motif; it reads ECD. Positions 468, 469, 471, 483, and 484 each coordinate Ca(2+).

Belongs to the venom metalloproteinase (M12B) family. P-III subfamily. P-IIIb sub-subfamily. Monomer. Zn(2+) is required as a cofactor. In terms of tissue distribution, expressed by the venom gland.

It localises to the secreted. It catalyses the reaction Cleavage of 5-His-|-Leu-6, 10-His-|-Leu-11, 14-Ala-|-Leu-15, 16-Tyr-|-Leu-17 and 24-Phe-|-Phe-25 in insulin B chain.. Inhibited by EDTA and EGTA. In terms of biological role, has caseinolytic activity. Causes hemorrhage on rabbit skin and causes myonecrosis in mouse tibialis anterior muscle. Its function is as follows. Inhibits platelet aggregation. The sequence is that of Zinc metalloproteinase-disintegrin-like bothropasin from Bothrops jararaca (Jararaca).